The primary structure comprises 592 residues: Arginine--tRNA ligase (592 aa).

The 'HIGH' region signature appears at 123–133; the sequence is PNTNKPLHLGH.

Belongs to the class-I aminoacyl-tRNA synthetase family. In terms of assembly, monomer.

Its subcellular location is the cytoplasm. It carries out the reaction tRNA(Arg) + L-arginine + ATP = L-arginyl-tRNA(Arg) + AMP + diphosphate. This Flavobacterium johnsoniae (strain ATCC 17061 / DSM 2064 / JCM 8514 / BCRC 14874 / CCUG 350202 / NBRC 14942 / NCIMB 11054 / UW101) (Cytophaga johnsonae) protein is Arginine--tRNA ligase.